A 61-amino-acid polypeptide reads, in one-letter code: Small ribosomal subunit protein uS14 (61 aa).

4 residues coordinate Zn(2+): C24, C27, C40, and C43.

This sequence belongs to the universal ribosomal protein uS14 family. Zinc-binding uS14 subfamily. Part of the 30S ribosomal subunit. Contacts proteins S3 and S10. Zn(2+) is required as a cofactor.

Its function is as follows. Binds 16S rRNA, required for the assembly of 30S particles and may also be responsible for determining the conformation of the 16S rRNA at the A site. This Clostridium perfringens (strain ATCC 13124 / DSM 756 / JCM 1290 / NCIMB 6125 / NCTC 8237 / Type A) protein is Small ribosomal subunit protein uS14.